Here is a 500-residue protein sequence, read N- to C-terminus: Cytochrome P450 2D14 (500 aa).

Residue Cys446 coordinates heme.

The protein belongs to the cytochrome P450 family. It depends on heme as a cofactor.

It is found in the endoplasmic reticulum membrane. The protein resides in the microsome membrane. It catalyses the reaction an organic molecule + reduced [NADPH--hemoprotein reductase] + O2 = an alcohol + oxidized [NADPH--hemoprotein reductase] + H2O + H(+). Its function is as follows. Cytochromes P450 are a group of heme-thiolate monooxygenases. In liver microsomes, this enzyme is involved in an NADPH-dependent electron transport pathway. It oxidizes a variety of structurally unrelated compounds, including steroids, fatty acids, and xenobiotics. In Bos taurus (Bovine), this protein is Cytochrome P450 2D14 (CYP2D14).